Reading from the N-terminus, the 417-residue chain is Tyrosine--tRNA ligase (417 aa).

Tyr35 lines the L-tyrosine pocket. The 'HIGH' region motif lies at 40–49 (ATAGSLTVGH). L-tyrosine-binding residues include Tyr165 and Gln169. The short motif at 229–233 (KFGKS) is the 'KMSKS' region element. Lys232 is a binding site for ATP. Residues 350–416 (ISLLEALVFT…GKRFNALIIF (67 aa)) enclose the S4 RNA-binding domain.

Belongs to the class-I aminoacyl-tRNA synthetase family. TyrS type 1 subfamily. Homodimer.

The protein resides in the cytoplasm. The catalysed reaction is tRNA(Tyr) + L-tyrosine + ATP = L-tyrosyl-tRNA(Tyr) + AMP + diphosphate + H(+). Its function is as follows. Catalyzes the attachment of tyrosine to tRNA(Tyr) in a two-step reaction: tyrosine is first activated by ATP to form Tyr-AMP and then transferred to the acceptor end of tRNA(Tyr). The chain is Tyrosine--tRNA ligase from Phytoplasma mali (strain AT).